The following is a 93-amino-acid chain: uncharacterized protein (93 aa).

An N-terminal signal peptide occupies residues 1-11 (MALMVLMALVG). C12 carries N-palmitoyl cysteine lipidation. C12 is lipidated: S-diacylglycerol cysteine.

The protein localises to the cell membrane. This is an uncharacterized protein from Escherichia coli O6:K15:H31 (strain 536 / UPEC).